A 341-amino-acid polypeptide reads, in one-letter code: Methionine import ATP-binding protein MetN 2 (341 aa).

Residues 2–241 (INLQNVSKIY…PKEEMTKRFV (240 aa)) enclose the ABC transporter domain. 38 to 45 (GYSGAGKS) is an ATP binding site.

It belongs to the ABC transporter superfamily. Methionine importer (TC 3.A.1.24) family. The complex is composed of two ATP-binding proteins (MetN), two transmembrane proteins (MetI) and a solute-binding protein (MetQ).

It localises to the cell membrane. The enzyme catalyses L-methionine(out) + ATP + H2O = L-methionine(in) + ADP + phosphate + H(+). It carries out the reaction D-methionine(out) + ATP + H2O = D-methionine(in) + ADP + phosphate + H(+). Functionally, part of the ABC transporter complex MetNIQ involved in methionine import. Responsible for energy coupling to the transport system. This chain is Methionine import ATP-binding protein MetN 2, found in Bacillus licheniformis (strain ATCC 14580 / DSM 13 / JCM 2505 / CCUG 7422 / NBRC 12200 / NCIMB 9375 / NCTC 10341 / NRRL NRS-1264 / Gibson 46).